A 1427-amino-acid chain; its full sequence is Tonsoku-like protein (1427 aa).

Residues 1 to 21 are disordered; it reads MTSTKEIKQLQKAKSKAQSSN. Over residues 10–21 the composition is skewed to low complexity; the sequence is LQKAKSKAQSSN. TPR repeat units follow at residues 27–60, 67–100, 107–147, 162–195, 202–235, 242–275, 311–344, and 352–385; these read ASLCNQLGEVYAKTGDYQAAIEEHRQELALSEIL, AVANRKIGECYAELGNIEAALKHQRLHLNLARSV, QRAL…VDER, ARLLLNLGCVYDGMKEPQRCSDLIRQSIYIAEKN, YRANFNLGSIHFRNGQHSRAMRCFEQSKECARKM, SECFHSIGKILLHLGDFSAARRSLKKAFCLGSQQ, LDLSEQLGDLYCKVGCYSKALEAYQTQLACAEAL, and AVIHVSLAATYTDLRQHHRAVEHYRQELQLRKGN. Residues 465 to 502 are disordered; the sequence is LSLDQSEDEDEEDEVDNSEPLEDSDIQYSESDDEDLEG. Residues 469 to 501 are compositionally biased toward acidic residues; it reads QSEDEDEEDEVDNSEPLEDSDIQYSESDDEDLE. ANK repeat units lie at residues 522 to 551, 555 to 584, and 591 to 620; these read KGETVLHRACIEGNLKQVQYLIEQGHPVNV, CGWTPLHESCNYGHQEIVAFLLDRGANVND, and GGITPLHDTLSCGHFSVARLLVLRGASVTV. 3 disordered regions span residues 692–801, 865–922, and 941–961; these read PLLR…SESG, KKKR…KMNQ, and IMTQESDHIQEPAPPSHQAMP. The span at 742–761 shows a compositional bias: low complexity; sequence DDSSSSDNPDSDCSLSPLRP. A compositionally biased stretch (polar residues) spans 773-783; the sequence is SPQEVPSSQEL. Basic and acidic residues predominate over residues 871–880; it reads SEHNATRETT. Residues 881–890 show a composition bias toward polar residues; the sequence is SRSQNNSSTI. Residues 899–910 show a composition bias toward low complexity; it reads SCSSRGSLSLKK. LRR repeat units follow at residues 1113-1137, 1141-1168, 1174-1197, 1234-1258, 1293-1316, 1321-1346, and 1377-1400; these read QASLTELRISANRLNDELLPEMMAA, MPRLRVLDISANQITGEGLRKASDAFET, FPCLEELNLSMNPLGDGWTQALAS, TGNMRSVCLSHNALGSTGFELVLKT, DCPLTHLNLSGNGLTDHSVLLLAR, CPSLVSLDLSANPLVTSTGLHSLLNG, and SDHIRDLRLCSQSLNKLDQDALQQ.

The protein belongs to the Tonsoku family. In terms of assembly, component of the MMS22L-TONSL complex. Binds histones, with a strong preference for histone H3.1 (histones H3.1 and H3-4/H3.1t).

The protein localises to the nucleus. The protein resides in the chromosome. It is found in the cytoplasm. Its function is as follows. Component of the MMS22L-TONSL complex, a complex that promotes homologous recombination-mediated repair of double-strand breaks (DSBs) at stalled or collapsed replication forks. The MMS22L-TONSL complex is required to maintain genome integrity during DNA replication. It mediates the assembly of RAD51 filaments on single-stranded DNA (ssDNA): the MMS22L-TONSL complex is recruited to DSBs following histone replacement by histone chaperones and eviction of the replication protein A complex (RPA/RP-A) from DSBs. Following recruitment to DSBs, the TONSL-MMS22L complex promotes recruitment of RAD51 filaments and subsequent homologous recombination. Within the complex, TONSL acts as a histone reader, which recognizes and binds newly synthesized histones following their replacement by histone chaperones. The protein is Tonsoku-like protein (tonsl) of Danio rerio (Zebrafish).